Reading from the N-terminus, the 587-residue chain is Aspartate--tRNA ligase (587 aa).

E173 lines the L-aspartate pocket. An aspartate region spans residues 197–200; it reads QTLK. Residue R219 coordinates L-aspartate. Residues 219–221 and Q228 each bind ATP; that span reads RDE. H446 is an L-aspartate binding site. E480 lines the ATP pocket. An L-aspartate-binding site is contributed by R487. 532-535 provides a ligand contact to ATP; it reads GLDR.

It belongs to the class-II aminoacyl-tRNA synthetase family. Type 1 subfamily. As to quaternary structure, homodimer.

Its subcellular location is the cytoplasm. It carries out the reaction tRNA(Asp) + L-aspartate + ATP = L-aspartyl-tRNA(Asp) + AMP + diphosphate. Functionally, catalyzes the attachment of L-aspartate to tRNA(Asp) in a two-step reaction: L-aspartate is first activated by ATP to form Asp-AMP and then transferred to the acceptor end of tRNA(Asp). In Bacteroides thetaiotaomicron (strain ATCC 29148 / DSM 2079 / JCM 5827 / CCUG 10774 / NCTC 10582 / VPI-5482 / E50), this protein is Aspartate--tRNA ligase.